A 335-amino-acid chain; its full sequence is Nuclear transcription factor Y subunit gamma (335 aa).

It belongs to the NFYC/HAP5 subunit family. Heterotrimeric transcription factor composed of three components, NF-YA, NF-YB and NF-YC. NF-YB and NF-YC must interact and dimerize for NF-YA association and DNA binding.

The protein localises to the nucleus. Its function is as follows. Component of the sequence-specific heterotrimeric transcription factor (NF-Y) which specifically recognizes a 5'-CCAAT-3' box motif found in the promoters of its target genes. NF-Y can function as both an activator and a repressor, depending on its interacting cofactors. The sequence is that of Nuclear transcription factor Y subunit gamma (NFYC) from Pongo abelii (Sumatran orangutan).